The chain runs to 192 residues: uncharacterized protein (192 aa).

A Nudix hydrolase domain is found at 29–160; that stretch reads HRQAAVLIPI…PLDIYRRGDS (132 aa). Residues 67 to 89 carry the Nudix box motif; sequence GAVDDTDASVIAAALREAEEEVA. 2 residues coordinate Mg(2+): Glu83 and Glu87.

This sequence belongs to the Nudix hydrolase family. PCD1 subfamily. The cofactor is Mn(2+). Mg(2+) serves as cofactor.

Probably mediates the hydrolysis of some nucleoside diphosphate derivatives. This is an uncharacterized protein from Escherichia coli O139:H28 (strain E24377A / ETEC).